Here is a 466-residue protein sequence, read N- to C-terminus: Glutamate decarboxylase beta (466 aa).

Thr-62 and Asn-83 together coordinate substrate. Pyridoxal 5'-phosphate-binding positions include 126–127, Thr-212, and His-275; that span reads SS. Lys-276 is modified (N6-(pyridoxal phosphate)lysine). N6-acetyllysine occurs at positions 446, 453, and 464.

The protein belongs to the group II decarboxylase family. Homohexamer composed of three dimers. Requires pyridoxal 5'-phosphate as cofactor.

It carries out the reaction L-glutamate + H(+) = 4-aminobutanoate + CO2. Converts glutamate to gamma-aminobutyrate (GABA), consuming one intracellular proton in the reaction. The gad system helps to maintain a near-neutral intracellular pH when cells are exposed to extremely acidic conditions. The ability to survive transit through the acidic conditions of the stomach is essential for successful colonization of the mammalian host by commensal and pathogenic bacteria. This Shigella flexneri protein is Glutamate decarboxylase beta (gadB).